The primary structure comprises 211 residues: GATA transcription factor 19 (211 aa).

The GATA-type zinc finger occupies 77-102 (CANCDTTSTPLWRNGPRGPKSLCNAC). The tract at residues 111-131 (RRASTARNSTSGGGSTAAGVP) is disordered.

The protein belongs to the type IV zinc-finger family. Class B subfamily. Forms heterodimers with GATA18.

The protein localises to the nucleus. Its function is as follows. Transcriptional regulator that specifically binds 5'-GATA-3' or 5'-GAT-3' motifs within gene promoters. Regulates both flower and shoot apical meristem (SAM) development, especially for establishing organ boundaries in shoots and flowers, probably by controlling the number and position of WUS-expressing cells. This chain is GATA transcription factor 19, found in Arabidopsis thaliana (Mouse-ear cress).